The following is a 295-amino-acid chain: 4-hydroxy-tetrahydrodipicolinate synthase (295 aa).

Residue threonine 48 coordinates pyruvate. Tyrosine 136 (proton donor/acceptor) is an active-site residue. Lysine 164 acts as the Schiff-base intermediate with substrate in catalysis. Position 206 (isoleucine 206) interacts with pyruvate.

Belongs to the DapA family. As to quaternary structure, homotetramer; dimer of dimers.

It is found in the cytoplasm. The enzyme catalyses L-aspartate 4-semialdehyde + pyruvate = (2S,4S)-4-hydroxy-2,3,4,5-tetrahydrodipicolinate + H2O + H(+). It participates in amino-acid biosynthesis; L-lysine biosynthesis via DAP pathway; (S)-tetrahydrodipicolinate from L-aspartate: step 3/4. Functionally, catalyzes the condensation of (S)-aspartate-beta-semialdehyde [(S)-ASA] and pyruvate to 4-hydroxy-tetrahydrodipicolinate (HTPA). The chain is 4-hydroxy-tetrahydrodipicolinate synthase from Actinobacillus pleuropneumoniae serotype 5b (strain L20).